Reading from the N-terminus, the 864-residue chain is Leucine--tRNA ligase (864 aa).

The 'HIGH' region motif lies at 42–52 (PYPSGKLHMGH). A 'KMSKS' region motif is present at residues 624–628 (KMSKS). Lysine 627 lines the ATP pocket.

It belongs to the class-I aminoacyl-tRNA synthetase family.

It localises to the cytoplasm. The enzyme catalyses tRNA(Leu) + L-leucine + ATP = L-leucyl-tRNA(Leu) + AMP + diphosphate. The chain is Leucine--tRNA ligase from Burkholderia ambifaria (strain ATCC BAA-244 / DSM 16087 / CCUG 44356 / LMG 19182 / AMMD) (Burkholderia cepacia (strain AMMD)).